Reading from the N-terminus, the 377-residue chain is MFPQTTMDHILHPTPREGYYVVELNRSVWVVPNYYINLTPIGTGAYGTVCAAECTRSGTRVAIKKFNRPFQSIIHARRTYRELRLLRCMCHENIIDLLDVFTPNENVNDIEDVYFVSMLMGADLSNILKIQRLNDDHIQFLVYQILRGLKYIHSADIIHRDLKPSNIAVNEDCELKILDFGLARQTDSEMTGYVATRWYRAPEIMLNWMHYTQTVDVWSVGCILAELITGKTLFPGSDHIDQLTRIMSVTGTPDEEFLKKISSEEARNYIRNLPKMTRRDFKRLFAQATPQAIDLLEKMLHLDPDRRPTAKEAMEHEYLAAYHDETDEPIAEEMDLNDDVRADTIDEWKKIIWEEISDFQKNVAFADEEEDEEKMES.

In terms of domain architecture, Protein kinase spans 35–319; the sequence is YINLTPIGTG…AKEAMEHEYL (285 aa). ATP is bound by residues 41 to 49 and K64; that span reads IGTGAYGTV. The active-site Proton acceptor is the D179. A Phosphothreonine modification is found at T191. Residues 191 to 193 carry the TXY motif; it reads TGY. At Y193 the chain carries Phosphotyrosine.

It belongs to the protein kinase superfamily. CMGC Ser/Thr protein kinase family. MAP kinase subfamily. Interacts with transcription factor atf-7; perhaps in a manner dependent on dual specificity protein kinase sek-1. It depends on Mg(2+) as a cofactor. The cofactor is Mn(2+). Dually phosphorylated on Thr-191 and Tyr-193, probably by sek-1, which activates the enzyme. Increased phosphorylation in response to the heavy metal arsenite. Increased phosphorylation in response to intestinal colonization by probiotic Lactobacillus fermentum strain JDFM216. As to expression, expressed in intestinal cells.

It localises to the nucleus. It catalyses the reaction L-seryl-[protein] + ATP = O-phospho-L-seryl-[protein] + ADP + H(+). The enzyme catalyses L-threonyl-[protein] + ATP = O-phospho-L-threonyl-[protein] + ADP + H(+). Activated by phosphorylation on threonine and tyrosine. Inhibited by pyridinyl-imidazole related compounds. Functionally, serine/threonine kinase which responds to activation by environmental stress and pro-inflammatory cytokines by phosphorylating downstream targets. As part of a MAP kinase signaling pathway, plays a role in modulation of lifespan and immunity. Phosphorylates skn-1 which probably regulates skn-1 nuclear translocation in response to oxidative stress. Probably by activating skn-1, involved in the up-regulation of gcs-1 and glutathione-S-transferase gst-4 expression upon bacteria infection. Up-regulates expression of gcs-1 in intestinal cells upon arsenite treatment. Functions downstream of the MAPKK sek-1 and the MAPKKK nsy-1 as the MAP kinase which regulates pathogen resistance and responses to oxidative stress. Required for expression of antimicrobial peptide nlp-29 in response to fungal infection or physical injury. Involved in resistance to the nematotoxic C.cinerea galectin (Cgl2). May play a redundant role with other MAP kinases in susceptibility to anoxia, downstream of tir-1/nsy-1. Phosphorylates transcription factor rnt-1 during oxidative stress which results in rnt-1 stabilization in the intestine. Phosphorylates transcription factor atf-7 during pathogen infection resulting in modulation of target genes. Probably downstream of nsy-1 and sek-1, involved in germline apoptosis induced by heavy metals, such as Cu(2+). Regulates the basal expression of immune effector genes including irg-4, irg-5, mul-1 and drd-50. The sequence is that of Mitogen-activated protein kinase pmk-1 from Caenorhabditis elegans.